The following is a 150-amino-acid chain: 3-hydroxyacyl-[acyl-carrier-protein] dehydratase FabZ (150 aa).

H54 is a catalytic residue.

The protein belongs to the thioester dehydratase family. FabZ subfamily.

Its subcellular location is the cytoplasm. The enzyme catalyses a (3R)-hydroxyacyl-[ACP] = a (2E)-enoyl-[ACP] + H2O. In terms of biological role, involved in unsaturated fatty acids biosynthesis. Catalyzes the dehydration of short chain beta-hydroxyacyl-ACPs and long chain saturated and unsaturated beta-hydroxyacyl-ACPs. The chain is 3-hydroxyacyl-[acyl-carrier-protein] dehydratase FabZ from Chromobacterium violaceum (strain ATCC 12472 / DSM 30191 / JCM 1249 / CCUG 213 / NBRC 12614 / NCIMB 9131 / NCTC 9757 / MK).